We begin with the raw amino-acid sequence, 606 residues long: MRTRMTSTPLDKIRNFSIVAHIDHGKSTLSDRLIQTTGGLTAREMSAQVLDNMDIEKERGITIKAQTVRLTYKAADGETYILNLMDTPGHVDFAYEVSRSLAACEGSILVVDASQGVEAQTLANVYQAIDNNHEIVPVLNKVDLPAADVDRVKAQIEDVIGLDASDAVECSAKTGVGIPEVLEAIVTRLPPPKGDPNAPLKALLVDAWYDAYLGVVVLVRIFDGSLKAGQQVRMMQTGATHRIDKVGVFTPKATDVEYLGPGEVGFFTASIKEVADAAVGDTITDEKKPTAEALKGFKEVVPVVFCGLFPVDAADFEDLRAAVGKLRLNDASFTYEMESSAALGFGFRCGFLGLLHLEIIQERLSREFDLDLIATAPSVVYKIKLRNGDEIELHNPADLPDVMQIEEIAEPWIKATIFTPDDYLGGVIKLCQDRRGMQRELSYVGSRAMVVYDLPLNEVVFDFYDRLKSISKGYASFDYQLEDYRAGDLVKMSILVNSEPVDALSMLVHRSRAESRGRGMCEKMKELIPQHMFVIPIQAAIGGRIIARETVRALRKDVTAKCYGGDASRKKKLLEKQKEGKKRMRQFGKVEIPQEAFIAALKMDED.

A tr-type G domain is found at 11 to 193 (DKIRNFSIVA…AIVTRLPPPK (183 aa)). GTP is bound by residues 23 to 28 (DHGKST) and 140 to 143 (NKVD).

Belongs to the TRAFAC class translation factor GTPase superfamily. Classic translation factor GTPase family. LepA subfamily.

Its subcellular location is the cell inner membrane. The catalysed reaction is GTP + H2O = GDP + phosphate + H(+). Its function is as follows. Required for accurate and efficient protein synthesis under certain stress conditions. May act as a fidelity factor of the translation reaction, by catalyzing a one-codon backward translocation of tRNAs on improperly translocated ribosomes. Back-translocation proceeds from a post-translocation (POST) complex to a pre-translocation (PRE) complex, thus giving elongation factor G a second chance to translocate the tRNAs correctly. Binds to ribosomes in a GTP-dependent manner. This is Elongation factor 4 from Caulobacter vibrioides (strain ATCC 19089 / CIP 103742 / CB 15) (Caulobacter crescentus).